Here is a 65-residue protein sequence, read N- to C-terminus: Large ribosomal subunit protein bL35 (65 aa).

It belongs to the bacterial ribosomal protein bL35 family.

In Proteus mirabilis (strain HI4320), this protein is Large ribosomal subunit protein bL35.